A 207-amino-acid chain; its full sequence is MLASAGGYWPMSAQGVNKMRRRVLVAATSVVGAVGAGYALVPFVASMNPSARARAAGAPVEADISKLEPGALLRVKWRGKPVWVVHRSPEMLAALSSNDPKLVDPTSEVPQQPDYCKNPTRSIKPEYLVAIGICTHLGCSPTYRPEFGPDDLGSDWKGGFHCPCHGSRFDLAARVFKNVPAPTNLVIPKHVYLNDTTILIGEDRGSA.

The chain crosses the membrane as a helical span at residues 24–44; that stretch reads LVAATSVVGAVGAGYALVPFV. Positions 100–199 constitute a Rieske domain; sequence PKLVDPTSEV…HVYLNDTTIL (100 aa). [2Fe-2S] cluster is bound by residues cysteine 134, histidine 136, cysteine 162, and histidine 165. A disulfide bridge connects residues cysteine 139 and cysteine 164.

As to quaternary structure, the main subunits of complex b-c1 are: cytochrome b, cytochrome c1 and the Rieske protein. [2Fe-2S] cluster serves as cofactor.

The protein resides in the cell membrane. The enzyme catalyses a quinol + 2 Fe(III)-[cytochrome c](out) = a quinone + 2 Fe(II)-[cytochrome c](out) + 2 H(+)(out). Its function is as follows. Component of the ubiquinol-cytochrome c reductase complex (complex III or cytochrome b-c1 complex), which is a respiratory chain that generates an electrochemical potential coupled to ATP synthesis. This is Ubiquinol-cytochrome c reductase iron-sulfur subunit (petA) from Allochromatium vinosum (strain ATCC 17899 / DSM 180 / NBRC 103801 / NCIMB 10441 / D) (Chromatium vinosum).